The sequence spans 560 residues: Glucose-6-phosphate isomerase, cytosolic (560 aa).

At Ala2 the chain carries N-acetylalanine. Glu361 (proton donor) is an active-site residue. Residues His392 and Lys517 contribute to the active site.

It belongs to the GPI family. As to quaternary structure, homodimer.

The protein resides in the cytoplasm. The catalysed reaction is alpha-D-glucose 6-phosphate = beta-D-fructose 6-phosphate. It functions in the pathway carbohydrate degradation; glycolysis; D-glyceraldehyde 3-phosphate and glycerone phosphate from D-glucose: step 2/4. This chain is Glucose-6-phosphate isomerase, cytosolic (PGIC), found in Arabidopsis lyrata subsp. petraea (Northern rock-cress).